The sequence spans 200 residues: Recombination protein RecR (200 aa).

A C4-type zinc finger spans residues 59–74 (CSVCFHLSADPVCDIC). The Toprim domain occupies 82 to 176 (TVICVVADSR…RVTRIAFGLP (95 aa)).

This sequence belongs to the RecR family.

May play a role in DNA repair. It seems to be involved in an RecBC-independent recombinational process of DNA repair. It may act with RecF and RecO. This is Recombination protein RecR from Acaryochloris marina (strain MBIC 11017).